A 176-amino-acid chain; its full sequence is Insulin-like growth factor 1 (176 aa).

Residues 45–73 (GPETLCGAELVDTLQFVCGERGFYFSKPT) are b. Intrachain disulfides connect Cys50/Cys92, Cys62/Cys105, and Cys91/Cys96. Residues 74-85 (GYGPSSRRSHNR) form a c region. Residues 86–106 (GIVDECCFQSCELRRLEMYCA) are a. Residues 107–114 (PVKSGKAA) form a d region. Positions 115 to 176 (RSVRAQRHTD…GNTGGRNYRM (62 aa)) are cleaved as a propeptide — e peptide. The interval 115–176 (RSVRAQRHTD…GNTGGRNYRM (62 aa)) is disordered. Basic and acidic residues predominate over residues 140 to 161 (RGTERRTAQHPDKTKPKKEVHQ).

It belongs to the insulin family.

It localises to the secreted. Functionally, the insulin-like growth factors, isolated from plasma, are structurally and functionally related to insulin but have a much higher growth-promoting activity. Acts as a ligand for IGF1R. Binds to the alpha subunit of IGF1R, leading to the activation of the intrinsic tyrosine kinase activity which autophosphorylates tyrosine residues in the beta subunit thus initiatiating a cascade of down-stream signaling events leading to activation of the PI3K-AKT/PKB and the Ras-MAPK pathways. Binds to integrins. Its binding to integrins and subsequent ternary complex formation with integrins and IGFR1 are essential for IGF1 signaling. This chain is Insulin-like growth factor 1, found in Oncorhynchus mykiss (Rainbow trout).